The sequence spans 139 residues: Translation initiation factor 2 subunit beta (139 aa).

The protein belongs to the eIF-2-beta/eIF-5 family. Heterotrimer composed of an alpha, a beta and a gamma chain.

Its function is as follows. eIF-2 functions in the early steps of protein synthesis by forming a ternary complex with GTP and initiator tRNA. This Methanococcus aeolicus (strain ATCC BAA-1280 / DSM 17508 / OCM 812 / Nankai-3) protein is Translation initiation factor 2 subunit beta.